The following is a 512-amino-acid chain: Citrate synthase (512 aa).

Residues His-288, His-327, and Asp-383 contribute to the active site. The tract at residues 483 to 512 (AIPKTATGSKSQLSASIEQSFGEKISPQSH) is disordered. Residues 488-501 (ATGSKSQLSASIEQ) show a composition bias toward polar residues.

It belongs to the citrate synthase family.

The protein resides in the cytoplasm. The catalysed reaction is oxaloacetate + acetyl-CoA + H2O = citrate + CoA + H(+). The protein operates within carbohydrate metabolism; tricarboxylic acid cycle; isocitrate from oxaloacetate: step 1/2. This Dictyostelium discoideum (Social amoeba) protein is Citrate synthase (gltA).